A 513-amino-acid polypeptide reads, in one-letter code: Cytochrome P450 94A2 (513 aa).

Residues 7–24 (ISWLLFSTSLFWFLFLAT) traverse the membrane as a helical segment. Cys-455 is a heme binding site.

It belongs to the cytochrome P450 family. Heme is required as a cofactor. As to expression, weakly expressed in seedlings.

It is found in the endoplasmic reticulum membrane. In terms of biological role, catalyzes the omega-hydroxylation of various fatty acids (FA). The substrate specificity is higher for myristate &gt; laurate = palmitate (C14&gt;C16=C12). The polypeptide is Cytochrome P450 94A2 (CYP94A2) (Vicia sativa (Spring vetch)).